Reading from the N-terminus, the 53-residue chain is Conotoxin Cal6.27 (53 aa).

The N-terminal stretch at 1 to 24 (MKLTCVLIAAMLLLAVCQLDSADA) is a signal peptide. 3 cysteine pairs are disulfide-bonded: Cys29–Cys43, Cys36–Cys47, and Cys42–Cys51.

The protein belongs to the conotoxin O1 superfamily. In terms of tissue distribution, expressed by the venom duct.

The protein resides in the secreted. Its function is as follows. Probable neurotoxin. The polypeptide is Conotoxin Cal6.27 (Californiconus californicus (California cone)).